The chain runs to 86 residues: UPF0213 protein OB0043 (86 aa).

Residues 3–80 (EQHYVYILRC…LPRFEKLKLI (78 aa)) enclose the GIY-YIG domain.

It belongs to the UPF0213 family.

The sequence is that of UPF0213 protein OB0043 from Oceanobacillus iheyensis (strain DSM 14371 / CIP 107618 / JCM 11309 / KCTC 3954 / HTE831).